A 352-amino-acid chain; its full sequence is MPDIRDVEIIAPNFKRRLSGVTSTIVQLIPCQIRLGIKIATLGPGLPEDLPKLKWRQLLGLWRPPARRRRRVWHARRNNEMAVGILLRHLTRMPLKLLFTSAAQRRHTAYTKWLIRRMDAVIATSDRSGSFLEVPHTVIQHGVDLALFHPPEAAEDGIAATGLPGRHLVGCFGRVRHQKGTDLFVRAMIELLPQHTEWTAVVSGRVTAEHVAFADKLKADVVAAGLSDRILFLGEVPDIKIWYRRLTLYVAPSRNEGFGLTPLEAMASRTAVVASDAGAYAELIVTGETGSVVAASDGEALTRAIAPYIADPALAVAHGENALRHVRANFALEREASAIGAVYNSLLGDNRS.

Belongs to the glycosyltransferase group 1 family. Glycosyltransferase 4 subfamily.

It participates in bacterial outer membrane biogenesis; LPS core biosynthesis. Functionally, acts at transfer of mannose group to a 3-deoxy-D-mono octulonic acid (KDO) via an alpha-1,5 linkage. This chain is Lipopolysaccharide core biosynthesis mannosyltransferase LpcC (lpcC), found in Rhizobium leguminosarum bv. viciae.